Here is a 704-residue protein sequence, read N- to C-terminus: Elongation factor G (704 aa).

The 283-residue stretch at 8-290 (ARYRNIGISA…AVIDYLPSPV (283 aa)) folds into the tr-type G domain. GTP-binding positions include 17 to 24 (AHIDAGKT), 88 to 92 (DTPGH), and 142 to 145 (NKMD).

Belongs to the TRAFAC class translation factor GTPase superfamily. Classic translation factor GTPase family. EF-G/EF-2 subfamily.

The protein resides in the cytoplasm. Catalyzes the GTP-dependent ribosomal translocation step during translation elongation. During this step, the ribosome changes from the pre-translocational (PRE) to the post-translocational (POST) state as the newly formed A-site-bound peptidyl-tRNA and P-site-bound deacylated tRNA move to the P and E sites, respectively. Catalyzes the coordinated movement of the two tRNA molecules, the mRNA and conformational changes in the ribosome. This chain is Elongation factor G, found in Salmonella agona (strain SL483).